The sequence spans 172 residues: Large ribosomal subunit protein uL10 (172 aa).

It belongs to the universal ribosomal protein uL10 family. Part of the ribosomal stalk of the 50S ribosomal subunit. The N-terminus interacts with L11 and the large rRNA to form the base of the stalk. The C-terminus forms an elongated spine to which L12 dimers bind in a sequential fashion forming a multimeric L10(L12)X complex.

Functionally, forms part of the ribosomal stalk, playing a central role in the interaction of the ribosome with GTP-bound translation factors. The sequence is that of Large ribosomal subunit protein uL10 from Dinoroseobacter shibae (strain DSM 16493 / NCIMB 14021 / DFL 12).